A 391-amino-acid chain; its full sequence is 8-amino-7-oxononanoate synthase (391 aa).

Substrate is bound at residue arginine 19. Position 106–107 (106–107 (GY)) interacts with pyridoxal 5'-phosphate. Histidine 131 contacts substrate. Pyridoxal 5'-phosphate-binding residues include serine 178, histidine 206, and threonine 234. Lysine 237 carries the post-translational modification N6-(pyridoxal phosphate)lysine. Threonine 353 lines the substrate pocket.

The protein belongs to the class-II pyridoxal-phosphate-dependent aminotransferase family. BioF subfamily. Homodimer. It depends on pyridoxal 5'-phosphate as a cofactor.

The enzyme catalyses 6-carboxyhexanoyl-[ACP] + L-alanine + H(+) = (8S)-8-amino-7-oxononanoate + holo-[ACP] + CO2. It participates in cofactor biosynthesis; biotin biosynthesis. Functionally, catalyzes the decarboxylative condensation of pimeloyl-[acyl-carrier protein] and L-alanine to produce 8-amino-7-oxononanoate (AON), [acyl-carrier protein], and carbon dioxide. The chain is 8-amino-7-oxononanoate synthase from Geobacter metallireducens (strain ATCC 53774 / DSM 7210 / GS-15).